The primary structure comprises 296 residues: tRNA dimethylallyltransferase (296 aa).

2 to 9 serves as a coordination point for ATP; it reads GPTASGKT. 4-9 is a substrate binding site; the sequence is TASGKT. 3 interaction with substrate tRNA regions span residues 27-30, 151-155, and 232-237; these read DSAL, QRLSR, and RCVGYR.

This sequence belongs to the IPP transferase family. Monomer. The cofactor is Mg(2+).

The catalysed reaction is adenosine(37) in tRNA + dimethylallyl diphosphate = N(6)-dimethylallyladenosine(37) in tRNA + diphosphate. Functionally, catalyzes the transfer of a dimethylallyl group onto the adenine at position 37 in tRNAs that read codons beginning with uridine, leading to the formation of N6-(dimethylallyl)adenosine (i(6)A). The sequence is that of tRNA dimethylallyltransferase from Shewanella sp. (strain ANA-3).